We begin with the raw amino-acid sequence, 764 residues long: 5-methyltetrahydropteroyltriglutamate--homocysteine methyltransferase (764 aa).

5-methyltetrahydropteroyltri-L-glutamate is bound by residues 16 to 19 (RELK) and lysine 121. L-homocysteine is bound by residues 440–442 (IGS) and glutamate 493. Residues 440-442 (IGS) and glutamate 493 each bind L-methionine. 5-methyltetrahydropteroyltri-L-glutamate-binding positions include 524-525 (RC) and tryptophan 570. Aspartate 608 contributes to the L-homocysteine binding site. Aspartate 608 is an L-methionine binding site. Residue glutamate 614 coordinates 5-methyltetrahydropteroyltri-L-glutamate. Residues histidine 650, cysteine 652, and glutamate 674 each contribute to the Zn(2+) site. The Proton donor role is filled by histidine 703. Position 735 (cysteine 735) interacts with Zn(2+).

Belongs to the vitamin-B12 independent methionine synthase family. It depends on Zn(2+) as a cofactor.

The catalysed reaction is 5-methyltetrahydropteroyltri-L-glutamate + L-homocysteine = tetrahydropteroyltri-L-glutamate + L-methionine. Its pathway is amino-acid biosynthesis; L-methionine biosynthesis via de novo pathway; L-methionine from L-homocysteine (MetE route): step 1/1. Functionally, catalyzes the transfer of a methyl group from 5-methyltetrahydrofolate to homocysteine resulting in methionine formation. The sequence is that of 5-methyltetrahydropteroyltriglutamate--homocysteine methyltransferase from Burkholderia ambifaria (strain MC40-6).